Consider the following 430-residue polypeptide: tRNA(Ile)-lysidine synthase (430 aa).

21–26 serves as a coordination point for ATP; the sequence is SGGLDS.

This sequence belongs to the tRNA(Ile)-lysidine synthase family.

The protein localises to the cytoplasm. The enzyme catalyses cytidine(34) in tRNA(Ile2) + L-lysine + ATP = lysidine(34) in tRNA(Ile2) + AMP + diphosphate + H(+). Its function is as follows. Ligates lysine onto the cytidine present at position 34 of the AUA codon-specific tRNA(Ile) that contains the anticodon CAU, in an ATP-dependent manner. Cytidine is converted to lysidine, thus changing the amino acid specificity of the tRNA from methionine to isoleucine. The polypeptide is tRNA(Ile)-lysidine synthase (Salmonella typhimurium (strain LT2 / SGSC1412 / ATCC 700720)).